We begin with the raw amino-acid sequence, 199 residues long: Large ribosomal subunit protein bL25 (199 aa).

The protein belongs to the bacterial ribosomal protein bL25 family. CTC subfamily. Part of the 50S ribosomal subunit; part of the 5S rRNA/L5/L18/L25 subcomplex. Contacts the 5S rRNA. Binds to the 5S rRNA independently of L5 and L18.

This is one of the proteins that binds to the 5S RNA in the ribosome where it forms part of the central protuberance. The polypeptide is Large ribosomal subunit protein bL25 (Herpetosiphon aurantiacus (strain ATCC 23779 / DSM 785 / 114-95)).